Here is a 247-residue protein sequence, read N- to C-terminus: Complement C1q subcomponent subunit A (247 aa).

Residues 1–24 form the signal peptide; the sequence is MEAPRGWLVIMISVLAVSLASSAA. Residues 26-116 are disordered; that stretch reads DTCRDLDGRD…NPGNIKDQRR (91 aa). Residues 27–38 show a composition bias toward basic and acidic residues; that stretch reads TCRDLDGRDGAA. Positions 33–111 constitute a Collagen-like domain; the sequence is GRDGAARKPG…KGIKGNPGNI (79 aa). 4-hydroxyproline occurs at positions 41 and 47. Lys-50 is subject to 5-hydroxylysine. Residue Lys-50 is glycosylated (O-linked (Gal...) hydroxylysine). 4-hydroxyproline occurs at positions 56 and 59. Lys-69 is modified (5-hydroxylysine). O-linked (Gal...) hydroxylysine glycosylation is present at Lys-69. 4-hydroxyproline occurs at positions 81 and 87. A compositionally biased stretch (low complexity) spans 98–109; it reads LPGLKGIKGNPG. 5-hydroxylysine is present on Lys-102. An O-linked (Gal...) hydroxylysine glycan is attached at Lys-102. The region spanning 112–247 is the C1q domain; it reads KDQRRPAFSA…FSGFLIFPST (136 aa). A disulfide bridge connects residues Cys-174 and Cys-192. A Ca(2+)-binding site is contributed by Gln-201.

In terms of assembly, core component of the complement C1 complex, a calcium-dependent complex composed of 1 molecule of the C1Q subcomplex, 2 molecules of C1R and 2 molecules of C1S. The C1Q subcomplex is composed 18 subunits: 3 chains of C1QA, C1QB, and C1QC trimerize to form 6 collagen-like triple helices connected to six globular ligand-recognition modules (C1q domain). Interacts with CR1 (via Sushi 24 and Sushi 25 domains). Interacts (via C-terminus) with CD33; this interaction activates CD33 inhibitory motifs. O-linked glycans are assumed to be the Glc-Gal disaccharides typically found as secondary modifications of hydroxylated lysines in collagen-like domains.

The protein resides in the secreted. Its subcellular location is the cell surface. With respect to regulation, the C1Q subcomplex is inhibited by sulfated molecules, such as triterpenoid sulfates, heparan sulfate, or chondroitin sulfates. Core component of the complement C1 complex, a multiprotein complex that initiates the classical pathway of the complement system, a cascade of proteins that leads to phagocytosis and breakdown of pathogens and signaling that strengthens the adaptive immune system. The classical complement pathway is initiated by the C1Q subcomplex of the C1 complex, which specifically binds IgG or IgM immunoglobulins complexed with antigens, forming antigen-antibody complexes on the surface of pathogens: C1QA, together with C1QB and C1QC, specifically recognizes and binds the Fc regions of IgG or IgM via its C1q domain. Immunoglobulin-binding activates the proenzyme C1R, which cleaves C1S, initiating the proteolytic cascade of the complement system. The C1Q subcomplex is activated by a hexamer of IgG complexed with antigens, while it is activated by a pentameric IgM. The C1Q subcomplex also recognizes and binds phosphatidylserine exposed on the surface of cells undergoing programmed cell death, possibly promoting activation of the complement system. The sequence is that of Complement C1q subcomponent subunit A (C1QA) from Sus scrofa (Pig).